We begin with the raw amino-acid sequence, 165 residues long: UPF0303 protein BceJ2315_15790 (165 aa).

The protein belongs to the UPF0303 family.

The polypeptide is UPF0303 protein BceJ2315_15790 (Burkholderia cenocepacia (strain ATCC BAA-245 / DSM 16553 / LMG 16656 / NCTC 13227 / J2315 / CF5610) (Burkholderia cepacia (strain J2315))).